We begin with the raw amino-acid sequence, 385 residues long: 1-deoxy-D-xylulose 5-phosphate reductoisomerase (385 aa).

NADPH contacts are provided by Thr10, Gly11, Ser12, Ile13, Lys37, and Asn124. Lys125 provides a ligand contact to 1-deoxy-D-xylulose 5-phosphate. Glu126 is an NADPH binding site. A Mn(2+)-binding site is contributed by Asp150. 1-deoxy-D-xylulose 5-phosphate-binding residues include Ser151, Glu152, Ser176, and His199. Glu152 provides a ligand contact to Mn(2+). Gly205 is an NADPH binding site. Residues Ser212, Asn217, Lys218, and Glu221 each coordinate 1-deoxy-D-xylulose 5-phosphate. Glu221 is a binding site for Mn(2+).

The protein belongs to the DXR family. It depends on Mg(2+) as a cofactor. Mn(2+) serves as cofactor.

The catalysed reaction is 2-C-methyl-D-erythritol 4-phosphate + NADP(+) = 1-deoxy-D-xylulose 5-phosphate + NADPH + H(+). Its pathway is isoprenoid biosynthesis; isopentenyl diphosphate biosynthesis via DXP pathway; isopentenyl diphosphate from 1-deoxy-D-xylulose 5-phosphate: step 1/6. In terms of biological role, catalyzes the NADPH-dependent rearrangement and reduction of 1-deoxy-D-xylulose-5-phosphate (DXP) to 2-C-methyl-D-erythritol 4-phosphate (MEP). This is 1-deoxy-D-xylulose 5-phosphate reductoisomerase from Clostridium botulinum (strain Okra / Type B1).